Reading from the N-terminus, the 344-residue chain is Melanocyte-stimulating hormone receptor (344 aa).

The Extracellular segment spans residues Met-1–Glu-37. An N-linked (GlcNAc...) asparagine glycan is attached at Asn-29. Residues Val-38 to Ile-63 form a helical membrane-spanning segment. At Ala-64–Ser-72 the chain is on the cytoplasmic side. Residues Met-73–Leu-93 traverse the membrane as a helical segment. At Glu-94–Asn-118 the chain is on the extracellular side. Residues Thr-119–Val-140 form a helical membrane-spanning segment. Over Asp-141 to Arg-163 the chain is Cytoplasmic. The helical transmembrane segment at Ala-164–Tyr-183 threads the bilayer. Over Asp-184–Cys-191 the chain is Extracellular. A helical membrane pass occupies residues Leu-192–Leu-211. The Cytoplasmic portion of the chain corresponds to Ala-212–Ala-240. A helical membrane pass occupies residues Ala-241–Phe-266. At Cys-267 to Asn-279 the chain is on the extracellular side. Residues Phe-280–Phe-300 traverse the membrane as a helical segment. The Cytoplasmic segment spans residues Arg-301 to Pro-344. Cys-315 carries the S-palmitoyl cysteine lipid modification.

The protein belongs to the G-protein coupled receptor 1 family. Interacts with MGRN1, but does not undergo MGRN1-mediated ubiquitination; this interaction competes with GNAS-binding and thus inhibits agonist-induced cAMP production. Interacts with OPN3; the interaction results in a decrease in MC1R-mediated cAMP signaling and ultimately a decrease in melanin production in melanocytes.

The protein localises to the cell membrane. In terms of biological role, receptor for MSH (alpha, beta and gamma) and ACTH. The activity of this receptor is mediated by G proteins which activate adenylate cyclase. Mediates melanogenesis, the production of eumelanin (black/brown) and phaeomelanin (red/yellow), via regulation of cAMP signaling in melanocytes. The sequence is that of Melanocyte-stimulating hormone receptor (MC1R) from Callithrix geoffroyi (Geoffroy's marmoset).